The following is a 232-amino-acid chain: MTRPQAILTDIEGTTSSISFVKDVLFPYARRAMPAYVRDHGNHPQVRHWLNQVADEIGEDVPDEVLITTLQTWIDEDRKHTALKALQGLIWGDGYKTADFTAHIYADAAIQLKAWHAAGIPLYVYSSGSVPAQKLFFAHSDAGDLSGLITDWFDTEVGPKRESASYRRIAERIGVPGPEILFLSDVIEELDAAKRAGMRTALLDRLDDYPTPRSADEVGSHQRVESFSQLVL.

This sequence belongs to the HAD-like hydrolase superfamily. MasA/MtnC family. In terms of assembly, monomer. Mg(2+) serves as cofactor.

It catalyses the reaction 5-methylsulfanyl-2,3-dioxopentyl phosphate + H2O = 1,2-dihydroxy-5-(methylsulfanyl)pent-1-en-3-one + phosphate. The protein operates within amino-acid biosynthesis; L-methionine biosynthesis via salvage pathway; L-methionine from S-methyl-5-thio-alpha-D-ribose 1-phosphate: step 3/6. It functions in the pathway amino-acid biosynthesis; L-methionine biosynthesis via salvage pathway; L-methionine from S-methyl-5-thio-alpha-D-ribose 1-phosphate: step 4/6. Its function is as follows. Bifunctional enzyme that catalyzes the enolization of 2,3-diketo-5-methylthiopentyl-1-phosphate (DK-MTP-1-P) into the intermediate 2-hydroxy-3-keto-5-methylthiopentenyl-1-phosphate (HK-MTPenyl-1-P), which is then dephosphorylated to form the acireductone 1,2-dihydroxy-3-keto-5-methylthiopentene (DHK-MTPene). This chain is Enolase-phosphatase E1, found in Xanthomonas axonopodis pv. citri (strain 306).